Here is a 130-residue protein sequence, read N- to C-terminus: Iron-sulfur cluster insertion protein ErpA (130 aa).

3 residues coordinate iron-sulfur cluster: C58, C122, and C124.

The protein belongs to the HesB/IscA family. Homodimer. The cofactor is iron-sulfur cluster.

Its function is as follows. Required for insertion of 4Fe-4S clusters for at least IspG. The protein is Iron-sulfur cluster insertion protein ErpA of Stenotrophomonas maltophilia (strain R551-3).